We begin with the raw amino-acid sequence, 1080 residues long: Headcase protein (1080 aa).

7 disordered regions span residues 1–27 (MAPR…LQQQ), 181–277 (IYLN…GNNG), 310–335 (SLSS…ISVS), 655–693 (PLES…QPPK), 798–826 (SKYQ…QHAT), 891–916 (SGCS…DGSK), and 940–974 (QRQQ…NGWS). Positions 181-197 (IYLNGSGNRPTLANGSL) are enriched in polar residues. The span at 218-228 (NGGGGGGGAGV) shows a compositional bias: gly residues. Residues 232–251 (TKTPLSNNNGNSYAGLTPNP) are compositionally biased toward polar residues. Residues 263-277 (NNGNTASNGSSGNNG) show a composition bias toward low complexity. The span at 663–688 (GATTTQVPNAQGSPTASGCSSNTIAS) shows a compositional bias: polar residues. A compositionally biased stretch (low complexity) spans 801–826 (QQQQHQQQQQQRQQQHNLQPQQQHAT). Polar residues predominate over residues 900 to 913 (QPSLSPTASSNGND). The span at 941–974 (RQQPPQQQVPQQQPHAASPTASLTSSSSSSNGWS) shows a compositional bias: low complexity.

As to expression, expressed in all imaginal cells of the embryo and larvae. Expressed in a subset of tracheal fusion cells from stage 14 to the end of embryogenesis in metameres 2-9, lateral trunk and ventral anastomoses.

The protein resides in the cytoplasm. Its function is as follows. Required for imaginal cell differentiation, may be involved in hormonal responsiveness during metamorphosis. Involved in an inhibitory signaling mechanism to determine the number of cells that will form unicellular sprouts in the trachea. Regulated by transcription factor esg. The longer hdc protein is completely functional and the shorter protein carries some function. The polypeptide is Headcase protein (Drosophila melanogaster (Fruit fly)).